The chain runs to 180 residues: Bifunctional protein PyrR (180 aa).

Positions 101–113 (VILVDDVLYTGRT) match the PRPP-binding motif.

This sequence belongs to the purine/pyrimidine phosphoribosyltransferase family. PyrR subfamily. Homodimer and homohexamer; in equilibrium.

It carries out the reaction UMP + diphosphate = 5-phospho-alpha-D-ribose 1-diphosphate + uracil. In terms of biological role, regulates transcriptional attenuation of the pyrimidine nucleotide (pyr) operon by binding in a uridine-dependent manner to specific sites on pyr mRNA. This disrupts an antiterminator hairpin in the RNA and favors formation of a downstream transcription terminator, leading to a reduced expression of downstream genes. Functionally, also displays a weak uracil phosphoribosyltransferase activity which is not physiologically significant. The polypeptide is Bifunctional protein PyrR (Bacillus mycoides (strain KBAB4) (Bacillus weihenstephanensis)).